The sequence spans 238 residues: Tritrans,polycis-undecaprenyl-diphosphate synthase (geranylgeranyl-diphosphate specific) (238 aa).

Asp-18 is an active-site residue. A Mg(2+)-binding site is contributed by Asp-18. Substrate is bound by residues Gly-19 to Arg-22 and Ser-64 to Glu-66. The active-site Proton acceptor is Asn-67. Substrate contacts are provided by residues Arg-70, Arg-187, and Arg-193–Ser-195. Mg(2+) is bound at residue Glu-206.

This sequence belongs to the UPP synthase family. As to quaternary structure, homodimer. Requires Mg(2+) as cofactor.

It catalyses the reaction geranylgeranyl diphosphate + 7 isopentenyl diphosphate = tri-trans,hepta-cis-undecaprenyl diphosphate + 7 diphosphate. Functionally, catalyzes the sequential condensation of isopentenyl diphosphate (IPP) with geranylgeranyl diphosphate (GGPP) to yield (2Z,6Z,10Z,14Z,18Z,22Z,26Z,30E,34E,38E)-undecaprenyl diphosphate (tritrans,heptacis-UPP). It is probably the precursor of glycosyl carrier lipids. This is Tritrans,polycis-undecaprenyl-diphosphate synthase (geranylgeranyl-diphosphate specific) from Pyrobaculum aerophilum (strain ATCC 51768 / DSM 7523 / JCM 9630 / CIP 104966 / NBRC 100827 / IM2).